A 230-amino-acid chain; its full sequence is Ribose-5-phosphate isomerase A (230 aa).

Substrate-binding positions include 29-32 (TGST), 85-88 (DGAD), and 98-101 (KGGG). The active-site Proton acceptor is E107. K125 provides a ligand contact to substrate.

The protein belongs to the ribose 5-phosphate isomerase family. Homodimer.

It carries out the reaction aldehydo-D-ribose 5-phosphate = D-ribulose 5-phosphate. Its pathway is carbohydrate degradation; pentose phosphate pathway; D-ribose 5-phosphate from D-ribulose 5-phosphate (non-oxidative stage): step 1/1. Catalyzes the reversible conversion of ribose-5-phosphate to ribulose 5-phosphate. The chain is Ribose-5-phosphate isomerase A from Staphylococcus epidermidis (strain ATCC 35984 / DSM 28319 / BCRC 17069 / CCUG 31568 / BM 3577 / RP62A).